The following is a 379-amino-acid chain: Chaperone protein DnaJ (379 aa).

The region spanning 5-69 (DYYEVLGISK…NKRATIDQFG (65 aa)) is the J domain. The CR-type zinc finger occupies 136–218 (GTTKEISIRK…CHGKGTENKT (83 aa)). Cys149, Cys152, Cys166, Cys169, Cys192, Cys195, Cys206, and Cys209 together coordinate Zn(2+). CXXCXGXG motif repeat units lie at residues 149-156 (CETCHGDG), 166-173 (CSYCNGAG), 192-199 (CPKCNGSG), and 206-213 (CPTCHGKG).

The protein belongs to the DnaJ family. As to quaternary structure, homodimer. Zn(2+) serves as cofactor.

The protein localises to the cytoplasm. Participates actively in the response to hyperosmotic and heat shock by preventing the aggregation of stress-denatured proteins and by disaggregating proteins, also in an autonomous, DnaK-independent fashion. Unfolded proteins bind initially to DnaJ; upon interaction with the DnaJ-bound protein, DnaK hydrolyzes its bound ATP, resulting in the formation of a stable complex. GrpE releases ADP from DnaK; ATP binding to DnaK triggers the release of the substrate protein, thus completing the reaction cycle. Several rounds of ATP-dependent interactions between DnaJ, DnaK and GrpE are required for fully efficient folding. Also involved, together with DnaK and GrpE, in the DNA replication of plasmids through activation of initiation proteins. This Staphylococcus aureus protein is Chaperone protein DnaJ.